The primary structure comprises 224 residues: uncharacterized protein (224 aa).

Positions 10–77 constitute an HTH gntR-type domain; the sequence is TPYYLQFYNQ…DRNGFSITSL (68 aa). Residues 37–56 constitute a DNA-binding region (H-T-H motif); the sequence is ETQLAKSFGVSRSPIREAMR.

This is an uncharacterized protein from Bacillus subtilis (strain 168).